We begin with the raw amino-acid sequence, 1073 residues long: Carbamoyl phosphate synthase large chain (1073 aa).

Positions 1-402 (MPRRIDVRKV…ALQKAIRMLD (402 aa)) are carboxyphosphate synthetic domain. Positions 129, 169, 175, 176, 208, 210, 215, 241, 242, 243, 284, and 299 each coordinate ATP. An ATP-grasp 1 domain is found at 133–328 (RETMMKAGLP…LAYIAAKLAL (196 aa)). Gln284, Glu299, and Asn301 together coordinate Mg(2+). 3 residues coordinate Mn(2+): Gln284, Glu299, and Asn301. The oligomerization domain stretch occupies residues 403-555 (IGEPGVVAGP…MSYNAYEDDE (153 aa)). The interval 556–944 (PITTGRPRLI…LKSWLSVQGN (389 aa)) is carbamoyl phosphate synthetic domain. One can recognise an ATP-grasp 2 domain in the interval 681-871 (SQLLEELGIK…LMRAAAEAAL (191 aa)). Residues Arg717, Lys756, Leu758, Glu763, Gly787, Val788, His789, Ser790, Gln830, and Glu842 each contribute to the ATP site. Mg(2+) is bound by residues Gln830, Glu842, and Asn844. 3 residues coordinate Mn(2+): Gln830, Glu842, and Asn844. One can recognise an MGS-like domain in the interval 944 to 1073 (NRIPPAGSIV…EYWGPNVEPF (130 aa)). The tract at residues 945-1073 (RIPPAGSIVL…EYWGPNVEPF (129 aa)) is allosteric domain.

It belongs to the CarB family. In terms of assembly, composed of two chains; the small (or glutamine) chain promotes the hydrolysis of glutamine to ammonia, which is used by the large (or ammonia) chain to synthesize carbamoyl phosphate. Tetramer of heterodimers (alpha,beta)4. The cofactor is Mg(2+). Mn(2+) serves as cofactor.

It catalyses the reaction hydrogencarbonate + L-glutamine + 2 ATP + H2O = carbamoyl phosphate + L-glutamate + 2 ADP + phosphate + 2 H(+). The catalysed reaction is hydrogencarbonate + NH4(+) + 2 ATP = carbamoyl phosphate + 2 ADP + phosphate + 2 H(+). Its pathway is amino-acid biosynthesis; L-arginine biosynthesis; carbamoyl phosphate from bicarbonate: step 1/1. It participates in pyrimidine metabolism; UMP biosynthesis via de novo pathway; (S)-dihydroorotate from bicarbonate: step 1/3. Its function is as follows. Large subunit of the glutamine-dependent carbamoyl phosphate synthetase (CPSase). CPSase catalyzes the formation of carbamoyl phosphate from the ammonia moiety of glutamine, carbonate, and phosphate donated by ATP, constituting the first step of 2 biosynthetic pathways, one leading to arginine and/or urea and the other to pyrimidine nucleotides. The large subunit (synthetase) binds the substrates ammonia (free or transferred from glutamine from the small subunit), hydrogencarbonate and ATP and carries out an ATP-coupled ligase reaction, activating hydrogencarbonate by forming carboxy phosphate which reacts with ammonia to form carbamoyl phosphate. The sequence is that of Carbamoyl phosphate synthase large chain from Hyperthermus butylicus (strain DSM 5456 / JCM 9403 / PLM1-5).